A 144-amino-acid polypeptide reads, in one-letter code: Galectin b (144 aa).

The Galectin domain occupies Asp1–Val138.

In terms of biological role, lectin that binds beta-galactoside and a wide array of complex carbohydrates. The protein is Galectin b of Aplysina lactuca (Marine sponge).